The primary structure comprises 250 residues: tRNA (guanine-N(1)-)-methyltransferase (250 aa).

S-adenosyl-L-methionine contacts are provided by residues Gly116 and 136 to 141 (IGDYVL).

Belongs to the RNA methyltransferase TrmD family. As to quaternary structure, homodimer.

The protein resides in the cytoplasm. It carries out the reaction guanosine(37) in tRNA + S-adenosyl-L-methionine = N(1)-methylguanosine(37) in tRNA + S-adenosyl-L-homocysteine + H(+). Specifically methylates guanosine-37 in various tRNAs. The polypeptide is tRNA (guanine-N(1)-)-methyltransferase (Pseudomonas putida (strain ATCC 47054 / DSM 6125 / CFBP 8728 / NCIMB 11950 / KT2440)).